A 114-amino-acid chain; its full sequence is Protein U68 (114 aa).

It belongs to the herpesviridae UL96 family.

In Homo sapiens (Human), this protein is Protein U68 (U68).